The sequence spans 69 residues: MKKLLIRLIKFYRKYISPGRSSCCRFVPTCSQYAIDAINKYGAFKGSALAVYRILRCNPFCKGGYDPVR.

The protein belongs to the UPF0161 family.

The protein resides in the cell membrane. Functionally, could be involved in insertion of integral membrane proteins into the membrane. This is Putative membrane protein insertion efficiency factor from Clostridium beijerinckii (strain ATCC 51743 / NCIMB 8052) (Clostridium acetobutylicum).